The sequence spans 335 residues: MGRLILEHTLQGHKGRIWGVAWHPKGNVFASCGEDKAIRIWSLTGNTWSTKTILSDGHKRTIREIQWSPCGQYLASASFDATTAIWSKSSGEFECNATLEGHENEVKSVSWSRSGGLLATCSRDKSVWIWEVAGDDEFECAAVLNSHTQDVKRVVWHPTKEILASASYDNTIKMYAEEPIDNDWDCTATLTSHTSTIWGIDFDADGERLVSCSDDTTVKIWRAYHPGNSAGVATPDQQTVWKCVCTLSGQHSRAIYDVSWCKLTGLIATACGDDGIRIFKETSDSKPDEPTFEQLTAEESAHDQDVNSVQWNPVVAGQLISCSDDGTIKIWKVTE.

7 WD repeats span residues G12–K51, G57–N96, G101–C140, S146–D185, S192–G231, Q250–E289, and A301–E335.

The protein belongs to the WD repeat CIA1 family.

Its function is as follows. Essential component of the cytosolic iron-sulfur (Fe/S) protein assembly machinery. Required for the maturation of extramitochondrial Fe/S proteins. The polypeptide is Probable cytosolic iron-sulfur protein assembly protein Ciao1 (Drosophila yakuba (Fruit fly)).